A 999-amino-acid polypeptide reads, in one-letter code: MEAAHSVPVQDVLSRFGVAESCGLSPEQVRRNREKYGPNELPAEERKSLWELVLEQFEDLLVRILLMAAFLSFILAWFEEGEESTTAFVEPIVIIMILIANAVVGVWQERNAESAIEALKEYEPEMGKVIRADRSGVQRIRARDIVPGDIVEVAVGDKVPADIRIIEIRSTTLRVDQSILTGESMSVIKHADPIPDPRAVNQDKKNMLFSGTNIAAGKAVGIVIATGVYTEIGKIRNQMVETEPEKTPLQQKLDEFSQQLSKVIFLVCIAVWVINISHFSDPVHGGSWFRGAIYYFKTSVALAVAAIPEGLPAVITTCLALGTRRMAKKNAIVRSLPSVETLGCTSVICSDKTGTLTTNQMSVCRMFIMEKVEGTQCSLHEFSITGSTYAPEGQILKDEKPVRCGQYDGLVELATICALCNDSSLDYNESKKVYEKVGEATETALTCLVEKMNVFDTDTSKLSKVERANACNSVIKHLMRKECTLEFSRDRKSMSVYCTPTGPGHNSAGSKMFVKGAPESVIERCTHVRVGTAKVPLTPPVREKILSQIRDWGMGTDTLRCLALATHDAPVQRETMQLHDSTTFTHYETNLTFVGCVGMLDPPRKEVTSSIEMCRKAGIRVIMITGDNKGTAVAICRRIGIFTESEDVAGKAYTGREFDELSPEAQRQACREARCFARVEPAHKSRIVEYLQSFNEITAMTGDGVNDAPALKKAEIGIAMGSGTAVAKSAAEMVLSDDNFSTIVSAVEEGRAIYNNMKQFIRYLISSNVGEVVCIFLTAILGLPEALIPVQLLWVNLVTDGLPATALGFNPPDLDIMDKLPRNPKEPLISGWLFFRYLAIGVYVGLATVGAATWWFLYDAEGPQVSFHQLRNFMRCTEDNPIFEGVNCEIFESRYPTTMALSVLVTIEMCNALNSVSENQSLLRMPPWLNIWLLGAIVMSMALHFFILYVKPMPLIFQVTPLSWPQWVVVLKISLPVILLDEGLKYLSRNHLEGEEDKK.

At 1-48 (MEAAHSVPVQDVLSRFGVAESCGLSPEQVRRNREKYGPNELPAEERKS) the chain is on the cytoplasmic side. Residues 49-69 (LWELVLEQFEDLLVRILLMAA) form a helical membrane-spanning segment. Residues 70 to 89 (FLSFILAWFEEGEESTTAFV) are Lumenal-facing. The helical transmembrane segment at 90 to 110 (EPIVIIMILIANAVVGVWQER) threads the bilayer. The Cytoplasmic segment spans residues 111–253 (NAESAIEALK…PEKTPLQQKL (143 aa)). A helical membrane pass occupies residues 254–273 (DEFSQQLSKVIFLVCIAVWV). Residues 274 to 295 (INISHFSDPVHGGSWFRGAIYY) lie on the Lumenal side of the membrane. Residues 296–313 (FKTSVALAVAAIPEGLPA) form a helical membrane-spanning segment. Residues valine 304, alanine 305, isoleucine 307, and glutamate 309 each contribute to the Ca(2+) site. The Cytoplasmic segment spans residues 314 to 757 (VITTCLALGT…EEGRAIYNNM (444 aa)). The active-site 4-aspartylphosphate intermediate is the aspartate 351. Mg(2+) is bound by residues aspartate 351 and threonine 353. Threonine 353 provides a ligand contact to ATP. An interaction with phospholamban 1 region spans residues 370 to 400 (EKVEGTQCSLHEFSITGSTYAPEGQILKDEK). ATP-binding residues include glutamate 442, arginine 489, lysine 515, arginine 560, threonine 625, glycine 626, aspartate 627, arginine 678, and lysine 684. A Mg(2+)-binding site is contributed by aspartate 703. Asparagine 706 contributes to the ATP binding site. Residues 758 to 777 (KQFIRYLISSNVGEVVCIFL) traverse the membrane as a helical segment. Ca(2+) is bound by residues asparagine 768 and glutamate 771. Topologically, residues 778 to 787 (TAILGLPEAL) are lumenal. A helical transmembrane segment spans residues 788 to 808 (IPVQLLWVNLVTDGLPATALG). The interaction with phospholamban 2 stretch occupies residues 788-808 (IPVQLLWVNLVTDGLPATALG). The Ca(2+) site is built by asparagine 796, threonine 799, and aspartate 800. At 809–828 (FNPPDLDIMDKLPRNPKEPL) the chain is on the cytoplasmic side. Residues 829–851 (ISGWLFFRYLAIGVYVGLATVGA) traverse the membrane as a helical segment. The Lumenal portion of the chain corresponds to 852–897 (ATWWFLYDAEGPQVSFHQLRNFMRCTEDNPIFEGVNCEIFESRYPT). A helical transmembrane segment spans residues 898–917 (TMALSVLVTIEMCNALNSVS). Glutamate 908 is a Ca(2+) binding site. The Cytoplasmic segment spans residues 918 to 930 (ENQSLLRMPPWLN). Residues 931 to 949 (IWLLGAIVMSMALHFFILY) traverse the membrane as a helical segment. The Lumenal segment spans residues 950 to 964 (VKPMPLIFQVTPLSW). Residues 965–985 (PQWVVVLKISLPVILLDEGLK) form a helical membrane-spanning segment. The Cytoplasmic segment spans residues 986–999 (YLSRNHLEGEEDKK).

It belongs to the cation transport ATPase (P-type) (TC 3.A.3) family. Type IIA subfamily. Interacts with sarcolipin (SLN). Interacts with phospholamban (PLN). Interacts with myoregulin (MRLN). Interacts with DWORF. The cofactor is Mg(2+). As to expression, found in spleen, lung, intestine and brain.

The protein localises to the endoplasmic reticulum membrane. Its subcellular location is the sarcoplasmic reticulum membrane. It carries out the reaction Ca(2+)(in) + ATP + H2O = Ca(2+)(out) + ADP + phosphate + H(+). Its activity is regulated as follows. Inhibited by sarcolipin (SLN), phospholamban (PLN) and myoregulin (MRLN). Enhanced by DWORF; DWORF increases activity by displacing sarcolipin (SLN), phospholamban (PLN) and myoregulin (MRLN). This magnesium-dependent enzyme catalyzes the hydrolysis of ATP coupled with the transport of calcium. Transports calcium ions from the cytosol into the sarcoplasmic/endoplasmic reticulum lumen. Contributes to calcium sequestration involved in muscular excitation/contraction. In Gallus gallus (Chicken), this protein is Sarcoplasmic/endoplasmic reticulum calcium ATPase 3 (ATP2A3).